The chain runs to 374 residues: Putative F-box protein At3g16590 (374 aa).

In terms of domain architecture, F-box spans 1-45 (MPTKLPLELEDEILLRVPPLSLTRFRTVCKRWNTLFNDQRFINNH).

The sequence is that of Putative F-box protein At3g16590 from Arabidopsis thaliana (Mouse-ear cress).